The chain runs to 411 residues: Imidazolonepropionase (411 aa).

Fe(3+)-binding residues include histidine 75 and histidine 77. Zn(2+) contacts are provided by histidine 75 and histidine 77. 4-imidazolone-5-propanoate contacts are provided by arginine 84, tyrosine 147, and histidine 180. Tyrosine 147 provides a ligand contact to N-formimidoyl-L-glutamate. Position 245 (histidine 245) interacts with Fe(3+). Residue histidine 245 coordinates Zn(2+). Glutamine 248 is a binding site for 4-imidazolone-5-propanoate. Position 320 (aspartate 320) interacts with Fe(3+). Position 320 (aspartate 320) interacts with Zn(2+). N-formimidoyl-L-glutamate-binding residues include asparagine 322 and glycine 324. Threonine 325 is a 4-imidazolone-5-propanoate binding site.

The protein belongs to the metallo-dependent hydrolases superfamily. HutI family. The cofactor is Zn(2+). Requires Fe(3+) as cofactor.

It is found in the cytoplasm. The enzyme catalyses 4-imidazolone-5-propanoate + H2O = N-formimidoyl-L-glutamate. Its pathway is amino-acid degradation; L-histidine degradation into L-glutamate; N-formimidoyl-L-glutamate from L-histidine: step 3/3. Functionally, catalyzes the hydrolytic cleavage of the carbon-nitrogen bond in imidazolone-5-propanoate to yield N-formimidoyl-L-glutamate. It is the third step in the universal histidine degradation pathway. The polypeptide is Imidazolonepropionase (Aeromonas hydrophila subsp. hydrophila (strain ATCC 7966 / DSM 30187 / BCRC 13018 / CCUG 14551 / JCM 1027 / KCTC 2358 / NCIMB 9240 / NCTC 8049)).